A 270-amino-acid chain; its full sequence is Undecaprenyl-diphosphatase (270 aa).

8 helical membrane-spanning segments follow: residues 14 to 34 (GLTE…PTFL), 40 to 60 (GITF…LYFW), 88 to 108 (FYII…ETTI), 117 to 137 (SLIA…DTSG), 146 to 166 (ITLK…IPGV), 189 to 209 (FSFL…LSGL), 221 to 241 (PLLI…AFLL), and 249 to 269 (LYPF…FINF).

It belongs to the UppP family.

It localises to the cell inner membrane. The catalysed reaction is di-trans,octa-cis-undecaprenyl diphosphate + H2O = di-trans,octa-cis-undecaprenyl phosphate + phosphate + H(+). Functionally, catalyzes the dephosphorylation of undecaprenyl diphosphate (UPP). Confers resistance to bacitracin. This Geotalea daltonii (strain DSM 22248 / JCM 15807 / FRC-32) (Geobacter daltonii) protein is Undecaprenyl-diphosphatase.